Reading from the N-terminus, the 214-residue chain is Large ribosomal subunit protein uL3 (214 aa).

The tract at residues phenylalanine 129–phenylalanine 157 is disordered.

The protein belongs to the universal ribosomal protein uL3 family. Part of the 50S ribosomal subunit. Forms a cluster with proteins L14 and L19.

In terms of biological role, one of the primary rRNA binding proteins, it binds directly near the 3'-end of the 23S rRNA, where it nucleates assembly of the 50S subunit. The polypeptide is Large ribosomal subunit protein uL3 (Synechococcus sp. (strain JA-2-3B'a(2-13)) (Cyanobacteria bacterium Yellowstone B-Prime)).